A 327-amino-acid chain; its full sequence is Aspartate--ammonia ligase (327 aa).

The protein belongs to the class-II aminoacyl-tRNA synthetase family. AsnA subfamily.

It localises to the cytoplasm. It catalyses the reaction L-aspartate + NH4(+) + ATP = L-asparagine + AMP + diphosphate + H(+). It functions in the pathway amino-acid biosynthesis; L-asparagine biosynthesis; L-asparagine from L-aspartate (ammonia route): step 1/1. The protein is Aspartate--ammonia ligase of Bacillus cereus (strain B4264).